The following is a 472-amino-acid chain: Ribosomal protein uS12 methylthiotransferase RimO (472 aa).

An MTTase N-terminal domain is found at asparagine 33–proline 143. Residues cysteine 42, cysteine 78, cysteine 107, cysteine 175, cysteine 179, and cysteine 182 each coordinate [4Fe-4S] cluster. Residues leucine 161–glutamate 398 form the Radical SAM core domain. Residues alanine 401–aspartate 467 enclose the TRAM domain.

It belongs to the methylthiotransferase family. RimO subfamily. It depends on [4Fe-4S] cluster as a cofactor.

The protein resides in the cytoplasm. It carries out the reaction L-aspartate(89)-[ribosomal protein uS12]-hydrogen + (sulfur carrier)-SH + AH2 + 2 S-adenosyl-L-methionine = 3-methylsulfanyl-L-aspartate(89)-[ribosomal protein uS12]-hydrogen + (sulfur carrier)-H + 5'-deoxyadenosine + L-methionine + A + S-adenosyl-L-homocysteine + 2 H(+). Catalyzes the methylthiolation of an aspartic acid residue of ribosomal protein uS12. The protein is Ribosomal protein uS12 methylthiotransferase RimO of Shewanella baltica (strain OS185).